The sequence spans 526 residues: Tyrosine 2,3-aminomutase (526 aa).

The active-site Proton donor/acceptor is Tyr41. Position 71 (His71) interacts with substrate. A cross-link (5-imidazolinone (Ala-Gly)) is located at residues 130 to 132; that stretch reads ASG. Ser131 is modified (2,3-didehydroalanine (Ser)). Substrate-binding residues include Asn183 and Arg288.

Belongs to the TAL/TAM family. Homotetramer; dimer of dimers. In terms of processing, contains an active site 4-methylidene-imidazol-5-one (MIO), which is formed autocatalytically by cyclization and dehydration of residues Ala-Ser-Gly.

The enzyme catalyses L-tyrosine = 3-amino-3-(4-hydroxyphenyl)propanoate. It catalyses the reaction L-tyrosine = (E)-4-coumarate + NH4(+). In terms of biological role, has aminomutase and, to a much lesser extent, ammonia-lyase activity. Primarily, catalyzes the rearrangement of L-tyrosine to S-beta-tyrosine, which is probably incorporated into secondary metabolite myxovalargin. The aminomutase activity exclusively produces S-beta-tyrosine. The chain is Tyrosine 2,3-aminomutase from Myxococcus sp. (strain Mx-B0).